Here is a 407-residue protein sequence, read N- to C-terminus: S-adenosylmethionine synthase (407 aa).

Position 21 (histidine 21) interacts with ATP. Aspartate 23 is a Mg(2+) binding site. Glutamate 49 is a binding site for K(+). 2 residues coordinate L-methionine: glutamate 62 and glutamine 105. The segment at 105 to 115 (QSQEIGAGVDA) is flexible loop. Residues 179-181 (DGK), aspartate 259, 265-266 (RK), alanine 282, and lysine 286 each bind ATP. An L-methionine-binding site is contributed by aspartate 259. An L-methionine-binding site is contributed by lysine 290.

This sequence belongs to the AdoMet synthase family. In terms of assembly, homotetramer; dimer of dimers. Requires Mg(2+) as cofactor. K(+) serves as cofactor.

It is found in the cytoplasm. The catalysed reaction is L-methionine + ATP + H2O = S-adenosyl-L-methionine + phosphate + diphosphate. It participates in amino-acid biosynthesis; S-adenosyl-L-methionine biosynthesis; S-adenosyl-L-methionine from L-methionine: step 1/1. Functionally, catalyzes the formation of S-adenosylmethionine (AdoMet) from methionine and ATP. The overall synthetic reaction is composed of two sequential steps, AdoMet formation and the subsequent tripolyphosphate hydrolysis which occurs prior to release of AdoMet from the enzyme. The chain is S-adenosylmethionine synthase from Corynebacterium aurimucosum (strain ATCC 700975 / DSM 44827 / CIP 107346 / CN-1) (Corynebacterium nigricans).